The primary structure comprises 393 residues: Zinc finger CCCH domain-containing protein 2 (393 aa).

Residues 1–71 (MDVVCTEHQM…NRENKEYCYD (71 aa)) form a disordered region. Residues 20-37 (RKLLLSSKSFPSDSSSPR) show a composition bias toward low complexity. The segment covering 60 to 69 (DNNRENKEYC) has biased composition (basic and acidic residues). C3H1-type zinc fingers lie at residues 122-150 (QYSGEVCPEFRRGGDCSRGDDCEFAHGVF) and 159-181 (YRTEACKDGKHCKRKVCFFAHSP).

Interacts with MARD1/FLZ9 and RD21A. In terms of tissue distribution, specifically expressed in seeds.

The protein localises to the nucleus. Functionally, probable transcription repressor that functions as a negative regulator of phytochrome-mediated promotion of seed germination. Inhibits seed germination by regulating the expression of gibberellic acid (GA) and abscisic acid (ABA) metabolic genes. Does not regulate the expression of the DELLA genes RGA and RGA1. Activated by PIL5, a phytochrome-interacting basic helix-loop-helix transcription factor. Represses directly JMJ20 and JMJ22 expression in the absence of red light (R) and in far-red (FR) conditions. This chain is Zinc finger CCCH domain-containing protein 2, found in Arabidopsis thaliana (Mouse-ear cress).